The chain runs to 452 residues: MDTKHQDKPSILMLPWLAHGHIAPHLELAKKLSQKNFHIYFCSTPNNLQSFGRNVEKNFSSSIQLIELQLPNTFPELPSQNQTTKNLPPHLIYTLVGAFEDAKPAFCNILETLKPTLVMYDLFQPWAAEAAYQYDIAAILFLPLSAVACSFLLHNIVNPSLKYPFFESDYQDRESKNINYFLHLTANGTLNKDRFLKAFELSCKFVFIKTSREIESKYLDYFPSLMGNEIIPVGPLIQEPTFKEDDTKIMDWLSQKEPRSVVYASFGSEYFPSKDEIHEIASGLLLSEVNFIWAFRLHPDEKMTIEEALPQGFAEEIERNNKGMIVQGWVPQAKILRHGSIGGFLSHCGWGSVVEGMVFGVPIIGVPMAYEQPSNAKVVVDNGMGMVVPRDKINQRLGGEEVARVIKHVVLQEEAKQIRRKANEISESMKKIGDAEMSVVVEKLLQLVKKSE.

The Proton acceptor role is filled by H21. H21 is an an anthocyanidin binding site. Catalysis depends on D121, which acts as the Charge relay. The helical transmembrane segment at 136 to 156 (IAAILFLPLSAVACSFLLHNI) threads the bilayer. UDP-beta-L-rhamnose is bound by residues S268, V330, H347, G351, S352, and E355. Residues 407–436 (KHVVLQEEAKQIRRKANEISESMKKIGDAE) are a coiled coil.

This sequence belongs to the UDP-glycosyltransferase family. As to quaternary structure, monomer. As to expression, expressed in young fruits and leaves.

The protein resides in the membrane. The enzyme catalyses flavanone 7-O-beta-D-glucoside + UDP-beta-L-rhamnose = flavanone 7-O-[alpha-L-rhamnosyl-(1-&gt;2)-beta-D-glucoside] + UDP + H(+). Functionally, involved in the production of the bitter neohesperidosides in citrus. Shows a strict specificity for UDP-rhamnose as donor. This Citrus maxima (Pomelo) protein is Flavanone 7-O-glucoside 2''-O-beta-L-rhamnosyltransferase (C12RT1).